The sequence spans 535 residues: Dimethylaniline monooxygenase [N-oxide-forming] 2 (535 aa).

Alanine 2 bears the N-acetylalanine mark. FAD is bound by residues 9–13 (GAGVS), glutamate 32, 40–41 (VW), and 61–62 (NT). NADP(+)-binding positions include 60–61 (TN) and 195–198 (SGSD). Lysine 492 participates in a covalent cross-link: Glycyl lysine isopeptide (Lys-Gly) (interchain with G-Cter in SUMO). Residues 510 to 530 (FSVSFLLKILGLLAVVVAFFC) traverse the membrane as a helical segment.

Belongs to the FMO family. It depends on FAD as a cofactor. Requires Mg(2+) as cofactor.

It is found in the microsome membrane. It localises to the endoplasmic reticulum membrane. Its function is as follows. Catalyzes the oxidative metabolism of numerous xenobiotics, including mainly therapeutic drugs and insecticides that contain a soft nucleophile, most commonly nitrogen and sulfur and participates to their bioactivation. In Pan troglodytes (Chimpanzee), this protein is Dimethylaniline monooxygenase [N-oxide-forming] 2.